A 193-amino-acid chain; its full sequence is 3-isopropylmalate dehydratase small subunit (193 aa).

It belongs to the LeuD family. LeuD type 1 subfamily. Heterodimer of LeuC and LeuD.

It catalyses the reaction (2R,3S)-3-isopropylmalate = (2S)-2-isopropylmalate. It participates in amino-acid biosynthesis; L-leucine biosynthesis; L-leucine from 3-methyl-2-oxobutanoate: step 2/4. Its function is as follows. Catalyzes the isomerization between 2-isopropylmalate and 3-isopropylmalate, via the formation of 2-isopropylmaleate. The protein is 3-isopropylmalate dehydratase small subunit of Bacillus cereus (strain B4264).